The chain runs to 51 residues: VDCSEYPQPACTTERRPVCGSNNKTYSNKCNFCNAVVKSNGTLTVSHFGKC.

Residues 1–49 (VDCSEYPQPACTTERRPVCGSNNKTYSNKCNFCNAVVKSNGTLTVSHFG) enclose the Kazal-like domain. 3 cysteine pairs are disulfide-bonded: C3–C33, C11–C30, and C19–C51. N-linked (GlcNAc...) asparagine glycosylation is present at N40.

It localises to the secreted. This chain is Ovomucoid, found in Polyplectron napoleonis (Palawan peacock-pheasant).